An 81-amino-acid polypeptide reads, in one-letter code: Photosystem I iron-sulfur center (81 aa).

4Fe-4S ferredoxin-type domains are found at residues 2 to 31 (AHSV…MVPW) and 39 to 68 (IASA…VRVY). Residues Cys-11, Cys-14, Cys-17, Cys-21, Cys-48, Cys-51, Cys-54, and Cys-58 each contribute to the [4Fe-4S] cluster site.

In terms of assembly, the eukaryotic PSI reaction center is composed of at least 11 subunits. It depends on [4Fe-4S] cluster as a cofactor.

The protein resides in the plastid. The protein localises to the chloroplast thylakoid membrane. It catalyses the reaction reduced [plastocyanin] + hnu + oxidized [2Fe-2S]-[ferredoxin] = oxidized [plastocyanin] + reduced [2Fe-2S]-[ferredoxin]. Functionally, apoprotein for the two 4Fe-4S centers FA and FB of photosystem I (PSI); essential for photochemical activity. FB is the terminal electron acceptor of PSI, donating electrons to ferredoxin. The C-terminus interacts with PsaA/B/D and helps assemble the protein into the PSI complex. Required for binding of PsaD and PsaE to PSI. PSI is a plastocyanin/cytochrome c6-ferredoxin oxidoreductase, converting photonic excitation into a charge separation, which transfers an electron from the donor P700 chlorophyll pair to the spectroscopically characterized acceptors A0, A1, FX, FA and FB in turn. The chain is Photosystem I iron-sulfur center from Pyropia yezoensis (Susabi-nori).